Reading from the N-terminus, the 159-residue chain is ATP synthase subunit b 2 (159 aa).

The helical transmembrane segment at 1–21 threads the bilayer; it reads MDATFWALIGLIIFLAILAYL.

It belongs to the ATPase B chain family. In terms of assembly, F-type ATPases have 2 components, F(1) - the catalytic core - and F(0) - the membrane proton channel. F(1) has five subunits: alpha(3), beta(3), gamma(1), delta(1), epsilon(1). F(0) has three main subunits: a(1), b(2) and c(10-14). The alpha and beta chains form an alternating ring which encloses part of the gamma chain. F(1) is attached to F(0) by a central stalk formed by the gamma and epsilon chains, while a peripheral stalk is formed by the delta and b chains.

It is found in the cell inner membrane. F(1)F(0) ATP synthase produces ATP from ADP in the presence of a proton or sodium gradient. F-type ATPases consist of two structural domains, F(1) containing the extramembraneous catalytic core and F(0) containing the membrane proton channel, linked together by a central stalk and a peripheral stalk. During catalysis, ATP synthesis in the catalytic domain of F(1) is coupled via a rotary mechanism of the central stalk subunits to proton translocation. Functionally, component of the F(0) channel, it forms part of the peripheral stalk, linking F(1) to F(0). The chain is ATP synthase subunit b 2 from Brucella anthropi (strain ATCC 49188 / DSM 6882 / CCUG 24695 / JCM 21032 / LMG 3331 / NBRC 15819 / NCTC 12168 / Alc 37) (Ochrobactrum anthropi).